The chain runs to 1169 residues: Transcription-repair-coupling factor (1169 aa).

Residues 634–795 form the Helicase ATP-binding domain; sequence DMERERPMDR…MLGVRDLSVI (162 aa). Position 647–654 (647–654) interacts with ATP; that stretch reads GDVGYGKT. The DEEQ box motif lies at 748–751; that stretch reads DEEQ. Residues 809 to 970 enclose the Helicase C-terminal domain; that stretch reads VLEQNSNFIK…GFKIAMRDLN (162 aa).

In the N-terminal section; belongs to the UvrB family. It in the C-terminal section; belongs to the helicase family. RecG subfamily.

The protein resides in the cytoplasm. Couples transcription and DNA repair by recognizing RNA polymerase (RNAP) stalled at DNA lesions. Mediates ATP-dependent release of RNAP and its truncated transcript from the DNA, and recruitment of nucleotide excision repair machinery to the damaged site. This chain is Transcription-repair-coupling factor, found in Staphylococcus haemolyticus (strain JCSC1435).